Reading from the N-terminus, the 356-residue chain is Probable butyrate kinase (356 aa).

It belongs to the acetokinase family.

It localises to the cytoplasm. It carries out the reaction butanoate + ATP = butanoyl phosphate + ADP. The protein is Probable butyrate kinase of Clostridium perfringens (strain SM101 / Type A).